Reading from the N-terminus, the 96-residue chain is NADH-ubiquinone oxidoreductase chain 4L (96 aa).

The next 3 membrane-spanning stretches (helical) occupy residues 1–21 (MNPTTFIISFMIALSGLAFYQ), 24–44 (LLSLFLCLEGMALSVFCLMAI), and 57–77 (LPLIMLTFSVCEAGLSLVLLV).

Belongs to the complex I subunit 4L family.

Its subcellular location is the mitochondrion membrane. It catalyses the reaction a ubiquinone + NADH + 5 H(+)(in) = a ubiquinol + NAD(+) + 4 H(+)(out). Core subunit of the mitochondrial membrane respiratory chain NADH dehydrogenase (Complex I) which catalyzes electron transfer from NADH through the respiratory chain, using ubiquinone as an electron acceptor. Part of the enzyme membrane arm which is embedded in the lipid bilayer and involved in proton translocation. This chain is NADH-ubiquinone oxidoreductase chain 4L (MT-ND4L), found in Myxine glutinosa (Atlantic hagfish).